The chain runs to 68 residues: MSISARNQLKGKVVAVKKGLVTAEVVLEIAGGDKVTSIISLDSIEDLGVKEGTELTAVIKSTDVMILA.

The region spanning 2-68 (SISARNQLKG…IKSTDVMILA (67 aa)) is the Mop domain.

Binds one mole of molybdenum per mole of protein and contains a pterin. This is Molybdenum-pterin-binding protein 3 (mopIII) from Clostridium pasteurianum.